Consider the following 29-residue polypeptide: Serum amyloid P-component (29 aa).

Residues 6-29 (LGKVFVFSKESNVDDVKLLTPQTE) enclose the Pentraxin (PTX) domain.

The protein belongs to the pentraxin family. Homopentamer. Pentraxin (or pentaxin) have a discoid arrangement of 5 non-covalently bound subunits. The cofactor is Ca(2+).

It is found in the secreted. In Hippoglossus hippoglossus (Atlantic halibut), this protein is Serum amyloid P-component.